A 128-amino-acid chain; its full sequence is Azurin (128 aa).

Positions 1 to 128 constitute a Plastocyanin-like domain; that stretch reads AECKVDVDST…SMMKGAVVLK (128 aa). An intrachain disulfide couples Cys3 to Cys26. Cu cation-binding residues include His46, Cys112, His117, and Met121.

The protein localises to the periplasm. In terms of biological role, transfers electrons from cytochrome c551 to cytochrome oxidase. The polypeptide is Azurin (Pseudomonas chlororaphis (Pseudomonas aureofaciens)).